The chain runs to 596 residues: Elongation factor 4 (596 aa).

The tr-type G domain occupies 2-183; sequence KNIRNFSIIA…TIITKIPAPK (182 aa). Residues 14–19 and 130–133 contribute to the GTP site; these read DHGKST and NKID.

It belongs to the TRAFAC class translation factor GTPase superfamily. Classic translation factor GTPase family. LepA subfamily.

It is found in the cell inner membrane. The catalysed reaction is GTP + H2O = GDP + phosphate + H(+). Functionally, required for accurate and efficient protein synthesis under certain stress conditions. May act as a fidelity factor of the translation reaction, by catalyzing a one-codon backward translocation of tRNAs on improperly translocated ribosomes. Back-translocation proceeds from a post-translocation (POST) complex to a pre-translocation (PRE) complex, thus giving elongation factor G a second chance to translocate the tRNAs correctly. Binds to ribosomes in a GTP-dependent manner. The protein is Elongation factor 4 of Campylobacter lari (strain RM2100 / D67 / ATCC BAA-1060).